Here is an 83-residue protein sequence, read N- to C-terminus: MENDAGENVDLYVPRKCSASNRIIHAKDHASVQLSIVVVDPETGRQTDGTKTYAICGEIRRMGESDDCIVRLAKKDGLITKNF.

Belongs to the eukaryotic ribosomal protein eS21 family. As to quaternary structure, component of the 40S small ribosomal subunit. Interacts with sta.

It is found in the cytoplasm. Its subcellular location is the cytosol. The protein localises to the rough endoplasmic reticulum. In terms of biological role, may be an associated component of the ribosome rather than a core structural subunit. May act as a translation initiation factor. Has a role in regulation of cell proliferation in the hematopoietic organs and the imaginal disks of larva. The polypeptide is Small ribosomal subunit protein eS21 (RpS21) (Drosophila grimshawi (Hawaiian fruit fly)).